The primary structure comprises 105 residues: Small ribosomal subunit protein uS10 (105 aa).

This sequence belongs to the universal ribosomal protein uS10 family. In terms of assembly, part of the 30S ribosomal subunit.

Functionally, involved in the binding of tRNA to the ribosomes. This is Small ribosomal subunit protein uS10 from Rickettsia prowazekii (strain Madrid E).